Reading from the N-terminus, the 362-residue chain is Mannan endo-1,4-beta-mannosidase (362 aa).

The N-terminal stretch at 1 to 26 is a signal peptide; it reads MFKKHTISLLIIFLLASAVLAKPIEA. The region spanning 38–349 is the GH26 domain; the sequence is QTTKTVMNWL…YHDSWTLNKG (312 aa). His131 contributes to the substrate binding site. The active-site Proton donor is the Glu193. The substrate site is built by Trp198 and Tyr268. Residue Glu292 is the Nucleophile of the active site. 324–325 contributes to the substrate binding site; the sequence is WN.

The protein belongs to the glycosyl hydrolase 26 family. Homodimer.

The protein resides in the secreted. It carries out the reaction Random hydrolysis of (1-&gt;4)-beta-D-mannosidic linkages in mannans, galactomannans and glucomannans.. Its function is as follows. Involved in the degradation of glucomannan. Catalyzes the endo hydrolysis of beta-1,4-linked mannan, galactomannan and glucomannan. The polypeptide is Mannan endo-1,4-beta-mannosidase (Bacillus subtilis (strain 168)).